Reading from the N-terminus, the 1073-residue chain is Probable inorganic carbon transporter subunit DabA 2 (1073 aa).

The segment covering 1–20 has biased composition (polar residues); that stretch reads MSSGNTSSQNHSPVNNQPTR. Residues 1–35 are disordered; that stretch reads MSSGNTSSQNHSPVNNQPTRLKSPLPALHKDTQPN. Zn(2+) contacts are provided by cysteine 535, aspartate 537, histidine 721, and cysteine 736.

The protein belongs to the inorganic carbon transporter (TC 9.A.2) DabA family. In terms of assembly, forms a complex with DabB. Zn(2+) serves as cofactor.

Its subcellular location is the cell inner membrane. Part of an energy-coupled inorganic carbon pump. The chain is Probable inorganic carbon transporter subunit DabA 2 from Rhodopirellula baltica (strain DSM 10527 / NCIMB 13988 / SH1).